The primary structure comprises 63 residues: Beta-defensin 38 (63 aa).

Residues 1-21 (MKISCFLLLILSLYFFQINQA) form the signal peptide. Intrachain disulfides connect Cys29–Cys58, Cys36–Cys51, and Cys41–Cys59.

This sequence belongs to the beta-defensin family. In terms of tissue distribution, only expressed in epididymis (caput, corpus and cauda).

The protein localises to the secreted. In terms of biological role, synthetic Defb38 kills both Gram-negative (E.coli and P.aeruginosa) and Gram-positive (E.faecium) bacteria. The protein is Beta-defensin 38 (Defb38) of Mus musculus (Mouse).